A 330-amino-acid chain; its full sequence is MTLIVTGAAGFIGSNLVKALNERGEDGIIAVDNLTRADKFKNLVDCEIDDYLDKTEFVERFARGDFGKVRAIFHEGACSDTMETDGRYMMDNNFRYSRAVLDACLAQGVQFLYASSAATYGGSTRFVEEREVEAPLNVYGYSKFLFDQVIRRVLPTAKSQIAGFRYFNVYGPRESHKARMASVAFHNFNQFRAEGKVKLFGEYNGYAAGEQTRDFVSVEDLVKVNLHFFDHPEKSGIFNLGSGRAQPFNDIASTVVNALRALDGEPALSLAELVQRGLIEYIPFPDALRGKYQCFTQADLTKLRAAGYDAPFLTVQEGVDRYVRWLSGQV.

Residues F11 to I12, D32 to N33, K39, K54, E75 to S79, and N92 contribute to the NADP(+) site. The active-site Proton acceptor is the Y139. Position 143 (K143) interacts with NADP(+). Position 168 (N168) interacts with substrate. NADP(+)-binding residues include V169 and K177. K177 (proton acceptor) is an active-site residue. Substrate contacts are provided by residues R179, H186, F200–Y203, R213, and Y292.

The protein belongs to the NAD(P)-dependent epimerase/dehydratase family. HldD subfamily. Homopentamer. Requires NADP(+) as cofactor.

It carries out the reaction ADP-D-glycero-beta-D-manno-heptose = ADP-L-glycero-beta-D-manno-heptose. Its pathway is nucleotide-sugar biosynthesis; ADP-L-glycero-beta-D-manno-heptose biosynthesis; ADP-L-glycero-beta-D-manno-heptose from D-glycero-beta-D-manno-heptose 7-phosphate: step 4/4. Catalyzes the interconversion between ADP-D-glycero-beta-D-manno-heptose and ADP-L-glycero-beta-D-manno-heptose via an epimerization at carbon 6 of the heptose. This is ADP-L-glycero-D-manno-heptose-6-epimerase from Paraburkholderia phymatum (strain DSM 17167 / CIP 108236 / LMG 21445 / STM815) (Burkholderia phymatum).